Reading from the N-terminus, the 146-residue chain is D-aminoacyl-tRNA deacylase (146 aa).

The Gly-cisPro motif, important for rejection of L-amino acids signature appears at 138–139; that stretch reads GP.

The protein belongs to the DTD family. As to quaternary structure, homodimer.

It localises to the cytoplasm. The enzyme catalyses glycyl-tRNA(Ala) + H2O = tRNA(Ala) + glycine + H(+). It catalyses the reaction a D-aminoacyl-tRNA + H2O = a tRNA + a D-alpha-amino acid + H(+). In terms of biological role, an aminoacyl-tRNA editing enzyme that deacylates mischarged D-aminoacyl-tRNAs. Also deacylates mischarged glycyl-tRNA(Ala), protecting cells against glycine mischarging by AlaRS. Acts via tRNA-based rather than protein-based catalysis; rejects L-amino acids rather than detecting D-amino acids in the active site. By recycling D-aminoacyl-tRNA to D-amino acids and free tRNA molecules, this enzyme counteracts the toxicity associated with the formation of D-aminoacyl-tRNA entities in vivo and helps enforce protein L-homochirality. The chain is D-aminoacyl-tRNA deacylase from Xanthomonas campestris pv. campestris (strain 8004).